The primary structure comprises 75 residues: Probable protein BRICK1-A (75 aa).

Residues 41–72 (MSCRSRLATLNEKLTALERRIEYIEARVTKGE) are a coiled coil.

It belongs to the BRK1 family.

The protein resides in the cytoplasm. Its subcellular location is the cytoskeleton. Its function is as follows. Involved in regulation of actin and microtubule organization. Part of a WAVE complex that activates the Arp2/3 complex. The chain is Probable protein BRICK1-A (brk1-a) from Xenopus laevis (African clawed frog).